A 677-amino-acid polypeptide reads, in one-letter code: Testis-specific Y-encoded-like protein 2 (677 aa).

The interval 1–54 (MDRPDEGPPAKTPRLSSSEPRQRDLPPPPPPPLQRLPLPPPQQRPRPQEETEAA) is disordered. Lys-11 participates in a covalent cross-link: Glycyl lysine isopeptide (Lys-Gly) (interchain with G-Cter in SUMO2). Ser-18 is modified (phosphoserine). Positions 25 to 44 (LPPPPPPPLQRLPLPPPQQR) are enriched in pro residues. Glycyl lysine isopeptide (Lys-Gly) (interchain with G-Cter in SUMO2) cross-links involve residues Lys-158 and Lys-160. The tract at residues 175–202 (KESVRRRQRRRRRRRKQRKAKESRERSA) is disordered. Residues 178–193 (VRRRQRRRRRRRKQRK) are compositionally biased toward basic residues. Thr-333 bears the Phosphothreonine mark. Positions 469–658 (ANENLCDSEN…EVNSEDSDIQ (190 aa)) are disordered. Polar residues predominate over residues 484-493 (GYNTKITDNK). Basic and acidic residues predominate over residues 509–525 (EKNTYDSEDSNSEKADG). Residues 526 to 540 (DNTTLRDNQQVTNIQ) show a composition bias toward polar residues. Composition is skewed to acidic residues over residues 543-581 (SDSD…DDDD) and 606-627 (DYEE…ETSE). Over residues 639–650 (DERIYGEERSEV) the composition is skewed to basic and acidic residues. Phosphoserine occurs at positions 648, 652, and 655.

Belongs to the nucleosome assembly protein (NAP) family. In terms of assembly, interacts with histones. Interacts with CASK. Part of a complex containing CASK, TBR1 and TSPYL2. In terms of processing, phosphorylation at Thr-333 impairs function on cell proliferation. As to expression, present at high levels in the pituitary gland and at moderate levels in adrenal gland, brain, testis and ovary. In brain, expressed both in mature neurons and progenitor cells (at protein level).

It is found in the nucleus. Its subcellular location is the cytoplasm. Part of the CASK/TBR1/TSPYL2 transcriptional complex which modulates gene expression in response to neuronal synaptic activity, probably by facilitating nucleosome assembly. May inhibit cell proliferation by inducing p53-dependent CDKN1A expression. The polypeptide is Testis-specific Y-encoded-like protein 2 (Tspyl2) (Mus musculus (Mouse)).